The following is a 212-amino-acid chain: Thiamine-phosphate synthase (212 aa).

4-amino-2-methyl-5-(diphosphooxymethyl)pyrimidine-binding positions include 35–39 (QLRDK) and Asn-67. Residues Asp-68 and Asp-87 each contribute to the Mg(2+) site. Ser-106 contacts 4-amino-2-methyl-5-(diphosphooxymethyl)pyrimidine. 132 to 134 (TGS) is a 2-[(2R,5Z)-2-carboxy-4-methylthiazol-5(2H)-ylidene]ethyl phosphate binding site. 4-amino-2-methyl-5-(diphosphooxymethyl)pyrimidine is bound at residue Lys-135. 2-[(2R,5Z)-2-carboxy-4-methylthiazol-5(2H)-ylidene]ethyl phosphate-binding positions include Gly-163 and 183–184 (IS).

It belongs to the thiamine-phosphate synthase family. It depends on Mg(2+) as a cofactor.

The catalysed reaction is 2-[(2R,5Z)-2-carboxy-4-methylthiazol-5(2H)-ylidene]ethyl phosphate + 4-amino-2-methyl-5-(diphosphooxymethyl)pyrimidine + 2 H(+) = thiamine phosphate + CO2 + diphosphate. The enzyme catalyses 2-(2-carboxy-4-methylthiazol-5-yl)ethyl phosphate + 4-amino-2-methyl-5-(diphosphooxymethyl)pyrimidine + 2 H(+) = thiamine phosphate + CO2 + diphosphate. It carries out the reaction 4-methyl-5-(2-phosphooxyethyl)-thiazole + 4-amino-2-methyl-5-(diphosphooxymethyl)pyrimidine + H(+) = thiamine phosphate + diphosphate. The protein operates within cofactor biosynthesis; thiamine diphosphate biosynthesis; thiamine phosphate from 4-amino-2-methyl-5-diphosphomethylpyrimidine and 4-methyl-5-(2-phosphoethyl)-thiazole: step 1/1. Its function is as follows. Condenses 4-methyl-5-(beta-hydroxyethyl)thiazole monophosphate (THZ-P) and 2-methyl-4-amino-5-hydroxymethyl pyrimidine pyrophosphate (HMP-PP) to form thiamine monophosphate (TMP). This is Thiamine-phosphate synthase from Methanocella arvoryzae (strain DSM 22066 / NBRC 105507 / MRE50).